The following is a 195-amino-acid chain: Ras-related protein Rab-31 (195 aa).

Residues G16, G18, K19, S20, S21, D32, and H33 each contribute to the GTP site. S20 contacts Mg(2+). Short sequence motifs (switch) lie at residues 30–42 and 63–79; these read HFDH…IGAS and AGQE…YRGS. A Phosphoserine modification is found at S36. Residues T38, G64, N119, D122, A150, and K151 each contribute to the GTP site. Position 38 (T38) interacts with Mg(2+). 2 S-geranylgeranyl cysteine lipidation sites follow: C194 and C195.

The protein belongs to the small GTPase superfamily. Rab family. Interacts (in GDP-bound form) with RIN3 and GAPVD1, which function as guanine exchange factors (GEF). Interacts (in GTP-bound form) with EEA1. Interacts with NGFR. Interacts with EGFR. Interacts with OCRL. Interacts (in GTP-bound form) with APPL2; interaction contributes to or enhances recruitment of APPL2 to the phagosomes; interaction enhances Fc-gamma receptor-mediated phagocytosis through PI3K/Akt signaling in macrophages. Mg(2+) is required as a cofactor. In terms of tissue distribution, detected in brain astrocytes, spleen and intestine (at protein level).

The protein localises to the early endosome. It localises to the golgi apparatus. The protein resides in the trans-Golgi network. It is found in the trans-Golgi network membrane. Its subcellular location is the cytoplasmic vesicle. The protein localises to the phagosome. It localises to the phagosome membrane. The catalysed reaction is GTP + H2O = GDP + phosphate + H(+). With respect to regulation, regulated by guanine nucleotide exchange factors (GEFs) including RIN3 and GAPVD1 which promote the exchange of bound GDP for free GTP. Regulated by GTPase activating proteins (GAPs) which increase the GTP hydrolysis activity. Inhibited by GDP dissociation inhibitors (GDIs) which prevent Rab-GDP dissociation. In terms of biological role, the small GTPases Rab are key regulators of intracellular membrane trafficking, from the formation of transport vesicles to their fusion with membranes. Rabs cycle between an inactive GDP-bound form and an active GTP-bound form that is able to recruit to membranes different set of downstream effectors directly responsible for vesicle formation, movement, tethering and fusion. Required for the integrity and for normal function of the Golgi apparatus and the trans-Golgi network. Plays a role in insulin-stimulated translocation of GLUT4 to the cell membrane. Plays a role in the maturation of phagosomes that engulf pathogens, such as S.aureus and Mycobacterium. Plays a role in M6PR transport from the trans-Golgi network to endosomes. Plays a role in the internalization of EGFR from the cell membrane into endosomes. This Rattus norvegicus (Rat) protein is Ras-related protein Rab-31.